The chain runs to 531 residues: Light-independent protochlorophyllide reductase subunit B (531 aa).

Asp36 lines the [4Fe-4S] cluster pocket. The active-site Proton donor is Asp296. Gly431–Met432 contacts substrate.

It belongs to the ChlB/BchB/BchZ family. In terms of assembly, protochlorophyllide reductase is composed of three subunits; ChlL, ChlN and ChlB. Forms a heterotetramer of two ChlB and two ChlN subunits. [4Fe-4S] cluster is required as a cofactor.

The protein resides in the plastid. The protein localises to the chloroplast. It catalyses the reaction chlorophyllide a + oxidized 2[4Fe-4S]-[ferredoxin] + 2 ADP + 2 phosphate = protochlorophyllide a + reduced 2[4Fe-4S]-[ferredoxin] + 2 ATP + 2 H2O. Its pathway is porphyrin-containing compound metabolism; chlorophyll biosynthesis (light-independent). Its function is as follows. Component of the dark-operative protochlorophyllide reductase (DPOR) that uses Mg-ATP and reduced ferredoxin to reduce ring D of protochlorophyllide (Pchlide) to form chlorophyllide a (Chlide). This reaction is light-independent. The NB-protein (ChlN-ChlB) is the catalytic component of the complex. The chain is Light-independent protochlorophyllide reductase subunit B from Nephroselmis olivacea (Green alga).